The following is a 374-amino-acid chain: Queuine tRNA-ribosyltransferase (374 aa).

D91 functions as the Proton acceptor in the catalytic mechanism. Substrate-binding positions include D91–Y95, D145, Q189, and G216. The interval G247–D253 is RNA binding. The active-site Nucleophile is the D266. An RNA binding; important for wobble base 34 recognition region spans residues T271 to R275. Residues C304, C306, C309, and H335 each contribute to the Zn(2+) site.

It belongs to the queuine tRNA-ribosyltransferase family. In terms of assembly, homodimer. Within each dimer, one monomer is responsible for RNA recognition and catalysis, while the other monomer binds to the replacement base PreQ1. Zn(2+) serves as cofactor.

The catalysed reaction is 7-aminomethyl-7-carbaguanine + guanosine(34) in tRNA = 7-aminomethyl-7-carbaguanosine(34) in tRNA + guanine. It participates in tRNA modification; tRNA-queuosine biosynthesis. Functionally, catalyzes the base-exchange of a guanine (G) residue with the queuine precursor 7-aminomethyl-7-deazaguanine (PreQ1) at position 34 (anticodon wobble position) in tRNAs with GU(N) anticodons (tRNA-Asp, -Asn, -His and -Tyr). Catalysis occurs through a double-displacement mechanism. The nucleophile active site attacks the C1' of nucleotide 34 to detach the guanine base from the RNA, forming a covalent enzyme-RNA intermediate. The proton acceptor active site deprotonates the incoming PreQ1, allowing a nucleophilic attack on the C1' of the ribose to form the product. After dissociation, two additional enzymatic reactions on the tRNA convert PreQ1 to queuine (Q), resulting in the hypermodified nucleoside queuosine (7-(((4,5-cis-dihydroxy-2-cyclopenten-1-yl)amino)methyl)-7-deazaguanosine). This Leptospira borgpetersenii serovar Hardjo-bovis (strain JB197) protein is Queuine tRNA-ribosyltransferase.